We begin with the raw amino-acid sequence, 192 residues long: Xanthine phosphoribosyltransferase (192 aa).

Xanthine is bound by residues Leu20 and Asn27. 5-phospho-alpha-D-ribose 1-diphosphate is bound at residue 128–132 (ANGQA). Lys156 is a binding site for xanthine.

The protein belongs to the purine/pyrimidine phosphoribosyltransferase family. Xpt subfamily. In terms of assembly, homodimer.

The protein localises to the cytoplasm. The enzyme catalyses XMP + diphosphate = xanthine + 5-phospho-alpha-D-ribose 1-diphosphate. It participates in purine metabolism; XMP biosynthesis via salvage pathway; XMP from xanthine: step 1/1. Its function is as follows. Converts the preformed base xanthine, a product of nucleic acid breakdown, to xanthosine 5'-monophosphate (XMP), so it can be reused for RNA or DNA synthesis. This is Xanthine phosphoribosyltransferase from Listeria monocytogenes serotype 4b (strain CLIP80459).